Reading from the N-terminus, the 656-residue chain is Receptor-type tyrosine-protein phosphatase R (656 aa).

Residues 1-23 form the signal peptide; that stretch reads MRRAVGFPALCLLLNLHAAGCFS. Residue S23 is glycosylated (O-linked (Xyl...) (chondroitin sulfate) serine). The Extracellular portion of the chain corresponds to 25–225; that stretch reads NNDHFLAIRQ…HEADKIWSKE (201 aa). The N-linked (GlcNAc...) asparagine glycan is linked to N128. A helical membrane pass occupies residues 226–248; it reads GFYAVVIFLSIFIIIVTCLMIIY. The Cytoplasmic segment spans residues 249–656; the sequence is RLKERLQLSF…ESRLSPETVQ (408 aa). S271 carries the post-translational modification Phosphoserine. S338 carries the phosphoserine; by PKA modification. Residues 392 to 646 form the Tyrosine-protein phosphatase domain; it reads LQSEFMEIPM…EFVHHALCLF (255 aa). Substrate is bound by residues D553, 587-593, and Q631; that span reads CSAGIGR. C587 acts as the Phosphocysteine intermediate in catalysis.

Belongs to the protein-tyrosine phosphatase family. Receptor class 7 subfamily. Interacts with MAPKs. In terms of tissue distribution, widely expressed in the brain, most abundant in cerebellum, midbrain, cerebral cortex and hippocampus. Also expressed in heart and skeletal muscle.

It is found in the cytoplasm. Its subcellular location is the cell membrane. It catalyses the reaction O-phospho-L-tyrosyl-[protein] + H2O = L-tyrosyl-[protein] + phosphate. Functionally, sequesters mitogen-activated protein kinases (MAPKs) such as MAPK1, MAPK3 and MAPK14 in the cytoplasm in an inactive form. The MAPKs bind to a dephosphorylated kinase interacting motif, phosphorylation of which by the protein kinase A complex releases the MAPKs for activation and translocation into the nucleus. The sequence is that of Receptor-type tyrosine-protein phosphatase R (Ptprr) from Rattus norvegicus (Rat).